Consider the following 420-residue polypeptide: ATP phosphoribosyltransferase regulatory subunit (420 aa).

The protein belongs to the class-II aminoacyl-tRNA synthetase family. HisZ subfamily. In terms of assembly, heteromultimer composed of HisG and HisZ subunits.

It is found in the cytoplasm. It functions in the pathway amino-acid biosynthesis; L-histidine biosynthesis; L-histidine from 5-phospho-alpha-D-ribose 1-diphosphate: step 1/9. Its function is as follows. Required for the first step of histidine biosynthesis. May allow the feedback regulation of ATP phosphoribosyltransferase activity by histidine. The chain is ATP phosphoribosyltransferase regulatory subunit from Bacillus cereus (strain G9842).